A 256-amino-acid chain; its full sequence is Small ribosomal subunit protein uS2 (256 aa).

The protein belongs to the universal ribosomal protein uS2 family.

This Methylococcus capsulatus (strain ATCC 33009 / NCIMB 11132 / Bath) protein is Small ribosomal subunit protein uS2.